A 721-amino-acid chain; its full sequence is Catalase-peroxidase 1 (721 aa).

Residues 98–223 (WHAAGSYRVA…LAAVQMGLIY (126 aa)) constitute a cross-link (tryptophyl-tyrosyl-methioninium (Trp-Tyr) (with M-249)). The Proton acceptor role is filled by His-99. A cross-link (tryptophyl-tyrosyl-methioninium (Tyr-Met) (with W-98)) is located at residues 223 to 249 (YVNPEGVNGQPDPLRTAQDVRVTFGRM). Residue His-264 participates in heme b binding.

The protein belongs to the peroxidase family. Peroxidase/catalase subfamily. As to quaternary structure, homodimer or homotetramer. The cofactor is heme b. Post-translationally, formation of the three residue Trp-Tyr-Met cross-link is important for the catalase, but not the peroxidase activity of the enzyme.

It carries out the reaction H2O2 + AH2 = A + 2 H2O. It catalyses the reaction 2 H2O2 = O2 + 2 H2O. Bifunctional enzyme with both catalase and broad-spectrum peroxidase activity. The polypeptide is Catalase-peroxidase 1 (Legionella pneumophila subsp. pneumophila (strain Philadelphia 1 / ATCC 33152 / DSM 7513)).